Here is a 254-residue protein sequence, read N- to C-terminus: DNA repair protein RecO (254 aa).

This sequence belongs to the RecO family.

Its function is as follows. Involved in DNA repair and RecF pathway recombination. The chain is DNA repair protein RecO from Gluconacetobacter diazotrophicus (strain ATCC 49037 / DSM 5601 / CCUG 37298 / CIP 103539 / LMG 7603 / PAl5).